The primary structure comprises 312 residues: Protein ABIL2 (312 aa).

A disordered region spans residues 173–287; sequence TIRETPPPPV…TEQQQPSKSK (115 aa). Residues 183–199 are compositionally biased toward low complexity; the sequence is RKSTSQSSSPRQPPQRS. The span at 230-251 shows a compositional bias: polar residues; the sequence is SVATRKSASISRPTTPSKSRSI. Residues 269–279 show a composition bias toward basic and acidic residues; it reads AFEKDNQKETE.

The protein belongs to the ABI family. Binds SCAR.

It localises to the cytoplasm. Its subcellular location is the cytoskeleton. In terms of biological role, involved in regulation of actin and microtubule organization. Part of a WAVE complex that activates the Arp2/3 complex. The sequence is that of Protein ABIL2 (ABIL2) from Arabidopsis thaliana (Mouse-ear cress).